The sequence spans 728 residues: Microtubule-associated protein VP5 (728 aa).

Belongs to the reoviridae microtubule-associated protein family.

It is found in the virion. Its subcellular location is the host cytoplasm. The protein localises to the host cytoskeleton. Its function is as follows. Minor inner capsid component. Displays NTPase and RNA 5'-triphosphatase (RTPase) activities. May function as a cofactor of polymerase. Associates with microtubules and plays a role in the formation, structural organization and morphology of viral inclusions, where the assembly of cores and the replication of viral RNA occur. The protein is Microtubule-associated protein VP5 (S5) of Aquareovirus C (isolate Golden shiner/USA/GSRV/1977) (AQRV-C).